Consider the following 253-residue polypeptide: Sugar fermentation stimulation protein homolog (253 aa).

Belongs to the SfsA family.

This Chromohalobacter salexigens (strain ATCC BAA-138 / DSM 3043 / CIP 106854 / NCIMB 13768 / 1H11) protein is Sugar fermentation stimulation protein homolog.